The chain runs to 947 residues: Microtubule cross-linking factor 3 (947 aa).

The signal sequence occupies residues 1–21 (MSQPPIGGAAPATAAASPAAA). Disordered stretches follow at residues 1–251 (MSQP…SYWK), 266–368 (KERA…TLKN), and 496–524 (LSLK…DNED). Low complexity-rich tracts occupy residues 9 to 24 (AAPA…AATE), 72 to 81 (QQQLQQQQQQ), and 109 to 137 (APKG…ALGG). Residues 141-151 (GPPEEPPRELE) are compositionally biased toward basic and acidic residues. Residues 164–180 (GEGGGGGGEGGGAGGGS) show a composition bias toward gly residues. The segment covering 214–236 (ASPSPSSSSAGKTPGTGSRNSGS) has biased composition (low complexity). Gly residues predominate over residues 237–248 (GVAGGGSGGGGS). 2 stretches are compositionally biased toward low complexity: residues 287-297 (SSRSSPVSGPP) and 304-325 (AVAS…AEGS). Residues 342–726 (HPQQLQEQEE…GKVMQLQYEN (385 aa)) are a coiled coil. 2 stretches are compositionally biased toward basic and acidic residues: residues 355–368 (EMEK…TLKN) and 496–513 (LSLK…EKKA). S569 is modified (phosphoserine). The segment at 743–786 (GIRGSPRDSDAESDAGKKESDDDSRPPHRKREGPIGGESDSEEV) is disordered. The segment covering 747 to 768 (SPRDSDAESDAGKKESDDDSRP) has biased composition (basic and acidic residues). Phosphoserine is present on S781. Residues 811–835 (DRQQMKDIRSEAERLGKTIDRLIAD) adopt a coiled-coil conformation. Residues 915–935 (PIILLILILVLFSSLSYTTIF) traverse the membrane as a helical segment.

Belongs to the MTCL family.

It localises to the membrane. The protein is Microtubule cross-linking factor 3 of Homo sapiens (Human).